A 330-amino-acid polypeptide reads, in one-letter code: Polyprenal reductase (330 aa).

Residues 1-16 (MAGWAGAELSVLNPLR) lie on the Cytoplasmic side of the membrane. Residues 17-37 (ALWLLLAAAFLLALLLQLAPA) traverse the membrane as a helical segment. Residues 38-89 (RLLPSCALFQDLIRYGKTKQSGSRRPAVCRAFDVPKRYFSHFYVVSVLWNGS) are Lumenal-facing. A helical membrane pass occupies residues 90–110 (LLWFLSQSLFLGAPFPSWLWA). Residues 111-136 (LLRTLGVTQFQALGMESKASRIQGKK) lie on the Cytoplasmic side of the membrane. A helical transmembrane segment spans residues 137 to 157 (LALSTFLVLVFLWVHSLRRLF). Residues 158 to 169 (ECFYVSVFSNTA) lie on the Lumenal side of the membrane. A helical transmembrane segment spans residues 170–190 (IHVVQYCFGLVYYVLVGLTVL). Topologically, residues 191–206 (SQVPMNDKNVYALGKN) are cytoplasmic. Residues 207–227 (LLLQARWFHILGMMMFFWSSA) traverse the membrane as a helical segment. The Lumenal segment spans residues 228-277 (HQYKCHVILSNLRRNKKGVVIHCQHRIPFGDWFEYVSSANYLAELMIYIS). A helical membrane pass occupies residues 278–298 (MAVTFGLHNVTWWLVVTYVFF). The Cytoplasmic portion of the chain corresponds to 299-330 (SQALSAFFNHRFYKSTFVSYPKHRKAFLPFLF).

The protein belongs to the steroid 5-alpha reductase family. Polyprenal reductase subfamily. Expressed in the 2 tissues tested i.e. testis and liver.

The protein resides in the endoplasmic reticulum membrane. The catalysed reaction is a di-trans,poly-cis-dolichal + NADP(+) = a di-trans,poly-cis-polyprenal + NADPH + H(+). It catalyses the reaction a 3-oxo-5alpha-steroid + NADP(+) = a 3-oxo-Delta(4)-steroid + NADPH + H(+). It carries out the reaction androst-4-ene-3,17-dione + NADPH + H(+) = 5alpha-androstan-3,17-dione + NADP(+). The enzyme catalyses 17beta-hydroxy-5alpha-androstan-3-one + NADP(+) = testosterone + NADPH + H(+). The protein operates within protein modification; protein glycosylation. Functionally, plays a key role in early steps of protein N-linked glycosylation by being involved in the conversion of polyprenol into dolichol. Acts as a polyprenal reductase that mediates the reduction of polyprenal into dolichal in a NADP-dependent mechanism. Dolichols are required for the synthesis of dolichol-linked monosaccharides and the oligosaccharide precursor used for N-glycosylation. Also able to convert testosterone (T) into 5-alpha-dihydrotestosterone (DHT). This Rattus norvegicus (Rat) protein is Polyprenal reductase.